The sequence spans 203 residues: Thymidylate kinase (203 aa).

An ATP-binding site is contributed by 9–16; the sequence is GPEGSGKT.

It belongs to the thymidylate kinase family.

It carries out the reaction dTMP + ATP = dTDP + ADP. Its function is as follows. Phosphorylation of dTMP to form dTDP in both de novo and salvage pathways of dTTP synthesis. The sequence is that of Thymidylate kinase from Staphylococcus haemolyticus (strain JCSC1435).